Here is a 254-residue protein sequence, read N- to C-terminus: Isoprenyl transferase (254 aa).

Residue D24 is part of the active site. D24 provides a ligand contact to Mg(2+). Substrate is bound by residues 25–28 (GNGR), W29, R37, H41, and 69–71 (SSE). N72 serves as the catalytic Proton acceptor. Substrate contacts are provided by residues W73, R75, R192, and 198 to 200 (RIS). E211 provides a ligand contact to Mg(2+).

The protein belongs to the UPP synthase family. As to quaternary structure, homodimer. The cofactor is Mg(2+).

Catalyzes the condensation of isopentenyl diphosphate (IPP) with allylic pyrophosphates generating different type of terpenoids. This chain is Isoprenyl transferase, found in Bordetella parapertussis (strain 12822 / ATCC BAA-587 / NCTC 13253).